Consider the following 386-residue polypeptide: Probable copper-dependent oxygenase M1 (386 aa).

Positions 1-22 (MLRMKKICTAFLTIALCTHVLA) are cleaved as a signal peptide. Residue Asn86 is glycosylated (N-linked (GlcNAc...) asparagine). A helical membrane pass occupies residues 334–354 (FVVPIAAIAFIALTIGAGYVF).

The protein belongs to the clz3 oxygenase family.

The protein localises to the membrane. It functions in the pathway secondary metabolite biosynthesis. Its function is as follows. Probable copper-dependent oxygenase; part of the gene cluster that mediates the biosynthesis of squalestatin S1 (SQS1, also known as zaragozic acid A), a heavily oxidized fungal polyketide that offers potent cholesterol lowering activity by targeting squalene synthase (SS). SQS1 is composed of a 2,8-dioxobicyclic[3.2.1]octane-3,4,5-tricarboxyclic acid core that is connected to two lipophilic polyketide arms. These initial steps feature the priming of an unusual benzoic acid starter unit onto the highly reducing polyketide synthase pks2, followed by oxaloacetate extension and product release to generate a tricarboxylic acid containing product. The phenylalanine ammonia lyase (PAL) M7 and the acyl-CoA ligase M9 are involved in transforming phenylalanine into benzoyl-CoA. The citrate synthase-like protein R3 is involved in connecting the C-alpha-carbons of the hexaketide chain and oxaloacetate to afford the tricarboxylic acid unit. The potential hydrolytic enzymes, M8 and M10, are in close proximity to pks2 and may participate in product release. On the other side, the tetraketide arm is synthesized by a the squalestatin tetraketide synthase pks1 and enzymatically esterified to the core in the last biosynthetic step, by the acetyltransferase M4. The biosynthesis of the tetraketide must involve 3 rounds of chain extension. After the first and second rounds methyl-transfer occurs, and in all rounds of extension the ketoreductase and dehydratase are active. The enoyl reductase and C-MeT of pks1 are not active in the final round of extension. The acetyltransferase M4 appears to have a broad substrate selectivity for its acyl CoA substrate, allowing the in vitro synthesis of novel squalestatins. The biosynthesis of SQS1 requires several oxidative steps likely performed by oxidoreductases M1, R1 and R2. Finally, in support of the identification of the cluster as being responsible for SQS1 production, the cluster contains a gene encoding a putative squalene synthase (SS) R6, suggesting a likely mechanism for self-resistance. This chain is Probable copper-dependent oxygenase M1, found in Phoma sp. (strain ATCC 20986 / MF5453).